The chain runs to 408 residues: Cytochrome bc1 complex Rieske iron-sulfur subunit (408 aa).

Helical transmembrane passes span 56-76 (VTFWLVLGIIGGLGFLATYIF), 98-118 (MLGITSGLCILSLGFAVVLYV), and 162-182 (LIMGLAGGGAVLAGLTIIAPM). A Rieske domain is found at 293–390 (HGPRNAVMLI…ITVDEEGYLI (98 aa)). [2Fe-2S] cluster is bound by residues Cys-333, His-335, Cys-352, and His-355. A disulfide bond links Cys-338 and Cys-354.

It belongs to the Rieske iron-sulfur protein family. The cytochrome bc1 complex is composed of a cytochrome b (QcrB), the Rieske iron-sulfur protein (QcrA) and a diheme cytochrome c (QcrC) subunit. The bc1 complex forms a supercomplex with cytochrome c oxidase (cytochrome aa3). [2Fe-2S] cluster serves as cofactor.

It localises to the cell membrane. Its function is as follows. Iron-sulfur subunit of the cytochrome bc1 complex, an essential component of the respiratory electron transport chain required for ATP synthesis. The bc1 complex catalyzes the oxidation of menaquinol and the reduction of cytochrome c in the respiratory chain. The bc1 complex operates through a Q-cycle mechanism that couples electron transfer to generation of the proton gradient that drives ATP synthesis. The chain is Cytochrome bc1 complex Rieske iron-sulfur subunit (qcrA) from Corynebacterium glutamicum (strain ATCC 13032 / DSM 20300 / JCM 1318 / BCRC 11384 / CCUG 27702 / LMG 3730 / NBRC 12168 / NCIMB 10025 / NRRL B-2784 / 534).